The sequence spans 380 residues: Chorismate synthase (380 aa).

Residue Arg-49 coordinates NADP(+). Residues Gly-288, 303–307, and Arg-330 contribute to the FMN site; that span reads KPPSS.

Belongs to the chorismate synthase family. It depends on FMNH2 as a cofactor.

The catalysed reaction is 5-O-(1-carboxyvinyl)-3-phosphoshikimate = chorismate + phosphate. It functions in the pathway metabolic intermediate biosynthesis; chorismate biosynthesis; chorismate from D-erythrose 4-phosphate and phosphoenolpyruvate: step 7/7. In terms of biological role, catalyzes the anti-1,4-elimination of the C-3 phosphate and the C-6 proR hydrogen from 5-enolpyruvylshikimate-3-phosphate (EPSP) to yield chorismate, which is the branch point compound that serves as the starting substrate for the three terminal pathways of aromatic amino acid biosynthesis. This reaction introduces a second double bond into the aromatic ring system. This Aeropyrum pernix (strain ATCC 700893 / DSM 11879 / JCM 9820 / NBRC 100138 / K1) protein is Chorismate synthase.